The sequence spans 217 residues: Cytidylate kinase (217 aa).

11 to 19 is a binding site for ATP; sequence GPAGAGKST.

This sequence belongs to the cytidylate kinase family. Type 1 subfamily.

It is found in the cytoplasm. It catalyses the reaction CMP + ATP = CDP + ADP. The enzyme catalyses dCMP + ATP = dCDP + ADP. The polypeptide is Cytidylate kinase (Clostridium perfringens (strain ATCC 13124 / DSM 756 / JCM 1290 / NCIMB 6125 / NCTC 8237 / Type A)).